A 141-amino-acid polypeptide reads, in one-letter code: Large ribosomal subunit protein uL11 (141 aa).

The protein belongs to the universal ribosomal protein uL11 family. In terms of assembly, part of the ribosomal stalk of the 50S ribosomal subunit. Interacts with L10 and the large rRNA to form the base of the stalk. L10 forms an elongated spine to which L12 dimers bind in a sequential fashion forming a multimeric L10(L12)X complex. One or more lysine residues are methylated.

In terms of biological role, forms part of the ribosomal stalk which helps the ribosome interact with GTP-bound translation factors. In Thermotoga neapolitana (strain ATCC 49049 / DSM 4359 / NBRC 107923 / NS-E), this protein is Large ribosomal subunit protein uL11.